A 526-amino-acid chain; its full sequence is MSTTVRPDEVSAILRKHLAGFESEADVYDVGTVLQVGDGIARIYGLSKVAAGELLEFPDNVMGMALNLEEDNVGAVMFGKSTAVKEGDTVKRTGILASIPVGEAMLGRVINPLGEPIDGKGPIETSIRLPLERKAPGVIFRKSVNQPLQTGLKAIDAMIPIGRGQRELIIGDRQTGKTAVAIDTIINQKGKDVFCIYVAIGQKGSTIAQVVSTLEKYGAMEYTTVIASSASDPAPMQFIAPYAGAAIGEFFRDTGRHALVIYDDLSKQAVAYRQLSLLLRRPPGREAYPGDVFYLHSRLLERAAKITDDLETAKKMNDLPEPLKPMVKAGGSLTALPVIETQAGDVSAYIPTNVISITDGQIFLEPNLFNAGQRPAINVGISVSRVGGSAQIKAMKKITGTLRLDLAQFRELEAFSKFGSDLDKATKAQLDRGARLVEILKQDQYVPMAVEKQVAIIFAGTQGVLDQLDLQYIRRFEEEFLSLLEHKHSDILNSIAETGQMDVDVAKRLKEVAEQFMSTFKQKVTA.

171-178 (GDRQTGKT) serves as a coordination point for ATP.

This sequence belongs to the ATPase alpha/beta chains family. As to quaternary structure, F-type ATPases have 2 components, CF(1) - the catalytic core - and CF(0) - the membrane proton channel. CF(1) has five subunits: alpha(3), beta(3), gamma(1), delta(1), epsilon(1). CF(0) has four main subunits: a, b, b' and c.

Its subcellular location is the cell inner membrane. It carries out the reaction ATP + H2O + 4 H(+)(in) = ADP + phosphate + 5 H(+)(out). Its function is as follows. Produces ATP from ADP in the presence of a proton gradient across the membrane. The alpha chain is a regulatory subunit. This chain is ATP synthase subunit alpha, found in Chlorobium phaeobacteroides (strain BS1).